The following is a 464-amino-acid chain: 3-isopropylmalate dehydratase large subunit (464 aa).

The [4Fe-4S] cluster site is built by Cys345, Cys405, and Cys408.

This sequence belongs to the aconitase/IPM isomerase family. LeuC type 1 subfamily. Heterodimer of LeuC and LeuD. [4Fe-4S] cluster is required as a cofactor.

The catalysed reaction is (2R,3S)-3-isopropylmalate = (2S)-2-isopropylmalate. It participates in amino-acid biosynthesis; L-leucine biosynthesis; L-leucine from 3-methyl-2-oxobutanoate: step 2/4. In terms of biological role, catalyzes the isomerization between 2-isopropylmalate and 3-isopropylmalate, via the formation of 2-isopropylmaleate. This is 3-isopropylmalate dehydratase large subunit from Flavobacterium johnsoniae (strain ATCC 17061 / DSM 2064 / JCM 8514 / BCRC 14874 / CCUG 350202 / NBRC 14942 / NCIMB 11054 / UW101) (Cytophaga johnsonae).